A 234-amino-acid polypeptide reads, in one-letter code: Large ribosomal subunit protein uL1 (234 aa).

It belongs to the universal ribosomal protein uL1 family. Part of the 50S ribosomal subunit.

Binds directly to 23S rRNA. The L1 stalk is quite mobile in the ribosome, and is involved in E site tRNA release. Functionally, protein L1 is also a translational repressor protein, it controls the translation of the L11 operon by binding to its mRNA. In terms of biological role, peptides originating from the N-terminal end of L1 have antibacterial activity against bacteria such as E.coli and B.megaterium and modest antifungal activities. Has no effect on H.pylori itself. Peptides are not hemolytic against mammalian cells. These peptides may be released in the stomach during altruistic lysis to kill other fast growing bacteria. This Helicobacter pylori (strain ATCC 700392 / 26695) (Campylobacter pylori) protein is Large ribosomal subunit protein uL1.